Here is a 622-residue protein sequence, read N- to C-terminus: Chaperone protein HscA homolog (622 aa).

Belongs to the heat shock protein 70 family.

Chaperone involved in the maturation of iron-sulfur cluster-containing proteins. Has a low intrinsic ATPase activity which is markedly stimulated by HscB. The polypeptide is Chaperone protein HscA homolog (Burkholderia cenocepacia (strain HI2424)).